The chain runs to 708 residues: Double-strand break repair protein MRE11 (708 aa).

Residue Ser2 is modified to N-acetylserine. At Ser2 the chain carries Phosphoserine. Mn(2+)-binding residues include Asp20, His22, and Asp60. The segment at 87–117 is interaction with NBN; that stretch reads RPVQFEILSDQSVNFGFSKFPWVNYQDGNLN. Position 128 (Asn128) interacts with Mn(2+). His129 functions as the Proton donor in the catalytic mechanism. Mn(2+) contacts are provided by His217, His245, and His247. Lys255 participates in a covalent cross-link: Glycyl lysine isopeptide (Lys-Gly) (interchain with G-Cter in SUMO2). A Phosphoserine modification is found at Ser275. Lys282 participates in a covalent cross-link: Glycyl lysine isopeptide (Lys-Gly) (interchain with G-Cter in UFM1). Lys339 is covalently cross-linked (Glycyl lysine isopeptide (Lys-Gly) (interchain with G-Cter in ubiquitin)). A Glycyl lysine isopeptide (Lys-Gly) (interchain with G-Cter in SUMO) cross-link involves residue Lys384. Lys416 participates in a covalent cross-link: Glycyl lysine isopeptide (Lys-Gly) (interchain with G-Cter in SUMO2). Residue Lys467 forms a Glycyl lysine isopeptide (Lys-Gly) (interchain with G-Cter in SUMO) linkage. Lys480 participates in a covalent cross-link: Glycyl lysine isopeptide (Lys-Gly) (interchain with G-Cter in ubiquitin). 2 disordered regions span residues 507-540 and 556-614; these read TRQK…ASAF and NDSD…AVSA. Residues 569–579 show a composition bias toward basic residues; sequence GRGRGRGRRGG. 9 positions are modified to asymmetric dimethylarginine: Arg570, Arg572, Arg574, Arg576, Arg577, Arg580, Arg587, Arg592, and Arg594. Positions 570 to 594 match the GAR motif; sequence RGRGRGRRGGRGQNSASRGGSQRGR. The span at 599 to 614 shows a compositional bias: polar residues; it reads LETSTRSRNSKTAVSA. The residue at position 619 (Ser619) is a Phosphoserine. Residue Lys625 forms a Glycyl lysine isopeptide (Lys-Gly) (interchain with G-Cter in SUMO2) linkage. Position 641 is a phosphoserine (Ser641). Ser649 is modified (phosphoserine; by PLK1). The disordered stretch occupies residues 651–708; that stretch reads VEEDIFPTTSKTDQRWSSTSSSKIMSQSQVSKGVDFESSEDDDDDPFMNTSSLRRNRR. The segment covering 667 to 681 has biased composition (low complexity); sequence SSTSSSKIMSQSQVS. Lys673 is subject to N6-lactoyllysine. 2 positions are modified to phosphoserine; by ATM: Ser676 and Ser678. Over residues 687–696 the composition is skewed to acidic residues; the sequence is ESSEDDDDDP. Ser688 is subject to Phosphoserine; by CDK2. Phosphoserine is present on residues Ser689 and Ser701. Residues 698–708 are compositionally biased toward polar residues; sequence MNTSSLRRNRR.

It belongs to the MRE11/RAD32 family. Component of the MRN complex composed of two heterodimers RAD50 and MRE11 associated with a single NBN. The MRN complexes dimerize on DNA to form joined MRN-MRN oligomers required for DNA double-strand break repair. As part of the MRN complex, interacts with MCM9; the interaction recruits the complex to DNA repair sites. Component of the BASC complex, at least composed of BRCA1, MSH2, MSH6, MLH1, ATM, BLM, RAD50, MRE11 and NBN. Found in a complex with TERF2. Interacts with DCLRE1C/Artemis and DCLRE1B/Apollo. Interacts with ATF2. Interacts with EXD2. Interacts with MRNIP. Interacts with SAMHD1; leading to stimulate 3'-5' exonuclease activity. Interacts (when ubiquitinated) with UBQLN4 (via its UBA domain). Interacts with CYREN (via XLF motif). Interacts with GFI1; promoting methylation by PRMT1. Interacts with DYNLL1; inhibiting the activity of MRE11. Interacts with C1QBP and RAD50; interaction takes place in absence of DNA damage to form the MRC (MRE11-RAD50-C1QBP) complex that inhibits the activity of MRE11. Interacts with AGER/RAGE. AGER is recruited to DNA double-strand break sites where it enhances MRE11 endonuclease activity to promote DNA repair. In terms of assembly, (Microbial infection) Interacts with herpes simplex virus 1 protein UL12. Mn(2+) serves as cofactor. Phosphorylated by ATM at Ser-676 and Ser-678 in response to DNA damage, promoting MRE11 activity: phosphorylation activates MRE11 by preventing the interaction between MRE11 and the C1QBP inhibitor. Phosphorylation at Ser-649 by PLK1 primes for phosphorylation at Ser-688 by CK2, inhibiting recruitment of the MRN complex to DNA damage sites. Post-translationally, asymmetric dimethylation by PRMT1 promotes MRE11 exonuclease activity. In terms of processing, lactylation at Lys-673 by CREBBP/CBP in response to DNA damage promotes DNA binding and MRE11 activity. Acetylated on lysine residues by KAT2A /GCN5. Post-translationally, ubiquitinated following DNA damage. Ubiquitination triggers interaction with UBQLN4, leading to MRE11 removal from chromatin and degradation by the proteasome. Ubiquitinated at Lys-339 and Lys-480 by RNF126 via 'Lys-27'- and 'Lys-29'-linked polyubiquitin chains, promoting the exonuclease activity of MRE11. In terms of processing, SUMOylated by PIAS1, stabilizing MRE11 on chromatin during end resection. DeSUMOylated by SENP3 following removal from DNA double-strand breaks (DSBs). Ufmylation at Lys-282 promotes MRE11 activity and is required for activation of the ATM and ATR kinases by the MRN complex. Post-translationally, (Microbial infection) Following infection by adenovirus E4, ubiquitinated and degraded by a SCF-like E3 ubiquitin ligase complex containing viral proteins E1B-55K and E4-ORF6.

It is found in the nucleus. The protein localises to the chromosome. It localises to the telomere. With respect to regulation, interaction with SAMHD1 stimulates the double-strand-specific 3'-5' exonuclease activity. RBBP8/CtIP specifically promotes the endonuclease activity to clear protein-DNA adducts and generate clean double-strand break ends. DYNLL1-binding inhibits the activity of MRE11. MRE11 activity is inhibited by C1QBP: in absence of DNA damage, C1QBP interacts with unphosphorylated MRE11, preventing formation and activity of the MRN complex. The mirin-derivative PFM39, specifically inhibits the 3'-5' exonuclease activity. The N-alkylated mirin-derivatives PFM03 and PFM01 specifically inhibit the endonuclease activity. Functionally, core component of the MRN complex, which plays a central role in double-strand break (DSB) repair, DNA recombination, maintenance of telomere integrity and meiosis. The MRN complex is involved in the repair of DNA double-strand breaks (DSBs) via homologous recombination (HR), an error-free mechanism which primarily occurs during S and G2 phases. The complex (1) mediates the end resection of damaged DNA, which generates proper single-stranded DNA, a key initial steps in HR, and is (2) required for the recruitment of other repair factors and efficient activation of ATM and ATR upon DNA damage. Within the MRN complex, MRE11 possesses both single-strand endonuclease activity and double-strand-specific 3'-5' exonuclease activity. After DSBs, MRE11 is loaded onto DSBs sites and cleaves DNA by cooperating with RBBP8/CtIP to initiate end resection. MRE11 first endonucleolytically cleaves the 5' strand at DNA DSB ends to prevent non-homologous end joining (NHEJ) and licence HR. It then generates a single-stranded DNA gap via 3' to 5' exonucleolytic degradation to create entry sites for EXO1- and DNA2-mediated 5' to 3' long-range resection, which is required for single-strand invasion and recombination. RBBP8/CtIP specifically promotes the endonuclease activity of MRE11 to clear protein-DNA adducts and generate clean double-strand break ends. MRE11 endonuclease activity is also enhanced by AGER/RAGE. The MRN complex is also required for DNA damage signaling via activation of the ATM and ATR kinases: the nuclease activity of MRE11 is not required to activate ATM and ATR. The MRN complex is also required for the processing of R-loops. The MRN complex is involved in the activation of the cGAS-STING pathway induced by DNA damage during tumorigenesis: the MRN complex acts by displacing CGAS from nucleosome sequestration, thereby activating it. In telomeres the MRN complex may modulate t-loop formation. In terms of biological role, MRE11 contains two DNA-binding domains (DBDs), enabling it to bind both single-stranded DNA (ssDNA) and double-stranded DNA (dsDNA). In Homo sapiens (Human), this protein is Double-strand break repair protein MRE11.